Reading from the N-terminus, the 67-residue chain is DNA-directed RNA polymerase subunit omega (67 aa).

Belongs to the RNA polymerase subunit omega family. The RNAP catalytic core consists of 2 alpha, 1 beta, 1 beta' and 1 omega subunit. When a sigma factor is associated with the core the holoenzyme is formed, which can initiate transcription.

The catalysed reaction is RNA(n) + a ribonucleoside 5'-triphosphate = RNA(n+1) + diphosphate. Functionally, promotes RNA polymerase assembly. Latches the N- and C-terminal regions of the beta' subunit thereby facilitating its interaction with the beta and alpha subunits. This is DNA-directed RNA polymerase subunit omega from Listeria welshimeri serovar 6b (strain ATCC 35897 / DSM 20650 / CCUG 15529 / CIP 8149 / NCTC 11857 / SLCC 5334 / V8).